The chain runs to 199 residues: Superoxide dismutase [Mn] 2 (199 aa).

Mn(2+) contacts are provided by His-28, His-75, Asp-157, and His-161.

Belongs to the iron/manganese superoxide dismutase family. Mn(2+) serves as cofactor.

It carries out the reaction 2 superoxide + 2 H(+) = H2O2 + O2. In terms of biological role, destroys superoxide anion radicals which are normally produced within the cells and which are toxic to biological systems. In Haloferax volcanii (strain ATCC 29605 / DSM 3757 / JCM 8879 / NBRC 14742 / NCIMB 2012 / VKM B-1768 / DS2) (Halobacterium volcanii), this protein is Superoxide dismutase [Mn] 2 (sod2).